A 155-amino-acid chain; its full sequence is Deoxyuridine 5'-triphosphate nucleotidohydrolase (155 aa).

Residues 74 to 76, asparagine 87, and 91 to 93 each bind substrate; these read RSG and TID.

It belongs to the dUTPase family. It depends on Mg(2+) as a cofactor.

The catalysed reaction is dUTP + H2O = dUMP + diphosphate + H(+). The protein operates within pyrimidine metabolism; dUMP biosynthesis; dUMP from dCTP (dUTP route): step 2/2. In terms of biological role, this enzyme is involved in nucleotide metabolism: it produces dUMP, the immediate precursor of thymidine nucleotides and it decreases the intracellular concentration of dUTP so that uracil cannot be incorporated into DNA. This Cereibacter sphaeroides (strain ATCC 17023 / DSM 158 / JCM 6121 / CCUG 31486 / LMG 2827 / NBRC 12203 / NCIMB 8253 / ATH 2.4.1.) (Rhodobacter sphaeroides) protein is Deoxyuridine 5'-triphosphate nucleotidohydrolase.